The following is a 103-amino-acid chain: Light-independent protochlorophyllide reductase subunit B (103 aa).

Belongs to the ChlB/BchB/BchZ family. Protochlorophyllide reductase is composed of three subunits; ChlL, ChlN and ChlB. Forms a heterotetramer of two ChlB and two ChlN subunits. The cofactor is [4Fe-4S] cluster.

The protein resides in the plastid. Its subcellular location is the chloroplast. The enzyme catalyses chlorophyllide a + oxidized 2[4Fe-4S]-[ferredoxin] + 2 ADP + 2 phosphate = protochlorophyllide a + reduced 2[4Fe-4S]-[ferredoxin] + 2 ATP + 2 H2O. The protein operates within porphyrin-containing compound metabolism; chlorophyll biosynthesis (light-independent). Its function is as follows. Component of the dark-operative protochlorophyllide reductase (DPOR) that uses Mg-ATP and reduced ferredoxin to reduce ring D of protochlorophyllide (Pchlide) to form chlorophyllide a (Chlide). This reaction is light-independent. The NB-protein (ChlN-ChlB) is the catalytic component of the complex. The protein is Light-independent protochlorophyllide reductase subunit B (chlB) of Sphaeropteris cooperi (Australian tree fern).